The chain runs to 456 residues: MFS-type transporter SLC18B1 (456 aa).

At methionine 1 the chain carries N-acetylmethionine. A disordered region spans residues 1–24 (MEALGDLEGPRAPGGDDPAGSAGE). Residues 1–33 (MEALGDLEGPRAPGGDDPAGSAGETPGWLSREQ) lie on the Cytoplasmic side of the membrane. Residues 10-23 (PRAPGGDDPAGSAG) show a composition bias toward low complexity. Phosphoserine is present on serine 21. Residues 34-54 (VFVLISAASVNLGSMMCYSIL) traverse the membrane as a helical segment. Residues 55-70 (GPFFPKEAEKKGASNT) lie on the Extracellular side of the membrane. Residues 71 to 91 (IIGMIFGCFALFELLASLVFG) form a helical membrane-spanning segment. Residues 92–100 (NYLVHIGAK) lie on the Cytoplasmic side of the membrane. A helical transmembrane segment spans residues 101 to 121 (FMFVAGMFVSGGVTILFGVLD). Topologically, residues 122-127 (RVPDGP) are extracellular. A helical transmembrane segment spans residues 128–148 (VFIAMCFLVRVMDAVSFAAAM). The Cytoplasmic portion of the chain corresponds to 149-161 (TASSSILAKAFPN). A helical membrane pass occupies residues 162 to 184 (NVATVLGSLETFSGLGLILGPPV). Over 185 to 195 (GGFLYQSFGYE) the chain is Extracellular. A helical transmembrane segment spans residues 196–216 (VPFIVLGCVVLLMVPLNMYIL). At 217–230 (PNYESDPGEHSFWK) the chain is on the cytoplasmic side. A helical transmembrane segment spans residues 231–251 (LIALPKVGLIAFVINSLSSCF). The Extracellular segment spans residues 252–272 (GFLDPTLSLFVLEKFNLPAGY). The chain crosses the membrane as a helical span at residues 273–293 (VGLVFLGMALSYAISSPLFGL). Residues 294-304 (LSDKRPPLRKW) are Cytoplasmic-facing. The helical transmembrane segment at 305–325 (LLVFGNLITAGCYMLLGPVPI) threads the bilayer. Over 326–331 (LHIKSQ) the chain is Extracellular. Residues 332–352 (LWLLVLILVVSGLSAGMSIIP) form a helical membrane-spanning segment. Topologically, residues 353-377 (TFPEILSCAHENGFEEGLSTLGLVS) are cytoplasmic. A helical membrane pass occupies residues 378 to 398 (GLFSAMWSIGAFMGPTLGGFL). Over 399 to 407 (YEKIGFEWA) the chain is Extracellular. Residues 408–428 (AAIQGLWALISGLAMGLFYLL) form a helical membrane-spanning segment. Over 429-456 (EYSRRKRSKSQNILSTEEERTTLLPNET) the chain is Cytoplasmic. Serine 438 carries the post-translational modification Phosphoserine.

Belongs to the major facilitator superfamily. In terms of tissue distribution, expressed in various tissues including lung, placenta, adrenal gland, liver, testis, and brain.

It localises to the cytoplasmic vesicle. Its subcellular location is the secretory vesicle membrane. The protein localises to the secretory vesicle. It is found in the synaptic vesicle membrane. It catalyses the reaction spermine(in) + n H(+)(out) = spermine(out) + n H(+)(in). The enzyme catalyses spermidine(in) + n H(+)(out) = spermidine(out) + n H(+)(in). It carries out the reaction serotonin(in) + n H(+)(out) = serotonin(out) + n H(+)(in). In terms of biological role, proton-coupled polyamine antiporter involved in the translocation of polyamines from cytosol into secretory vesicles prior to their release via exocytosis. Uses the electrochemical proton gradient generated by a V-type proton-pumping ATPase to couple the efflux of protons with the uptake of a polyamine molecule. Facilitates vesicular storage of spermine and spermidine in astrocytes with an impact on glutamatergic neuronal transmission and memory formation. Upon antigen stimulation, regulates polyamine accumulation and release in mast cell secretory granules, which in turn potentiates mast cell degranulation and histamine secretion. This is MFS-type transporter SLC18B1 from Homo sapiens (Human).